The chain runs to 501 residues: Glutamyl-tRNA(Gln) amidotransferase subunit A (501 aa).

Active-site charge relay system residues include Lys80 and Ser155. Ser179 functions as the Acyl-ester intermediate in the catalytic mechanism.

This sequence belongs to the amidase family. GatA subfamily. As to quaternary structure, heterotrimer of A, B and C subunits.

The catalysed reaction is L-glutamyl-tRNA(Gln) + L-glutamine + ATP + H2O = L-glutaminyl-tRNA(Gln) + L-glutamate + ADP + phosphate + H(+). In terms of biological role, allows the formation of correctly charged Gln-tRNA(Gln) through the transamidation of misacylated Glu-tRNA(Gln) in organisms which lack glutaminyl-tRNA synthetase. The reaction takes place in the presence of glutamine and ATP through an activated gamma-phospho-Glu-tRNA(Gln). The protein is Glutamyl-tRNA(Gln) amidotransferase subunit A of Cupriavidus pinatubonensis (strain JMP 134 / LMG 1197) (Cupriavidus necator (strain JMP 134)).